Here is a 247-residue protein sequence, read N- to C-terminus: Chaperone protein AfaB (247 aa).

The first 29 residues, 1–29 (MKMRAVAVFTGMLTGVLSVAGLLSAGAYA), serve as a signal peptide directing secretion.

It belongs to the periplasmic pilus chaperone family.

Its subcellular location is the periplasm. Functionally, involved in the biogenesis of the AFA-III afimbrial adhesin. The polypeptide is Chaperone protein AfaB (afaB) (Escherichia coli).